Consider the following 259-residue polypeptide: Deoxyribose-phosphate aldolase (259 aa).

Catalysis depends on Asp-102, which acts as the Proton donor/acceptor. Catalysis depends on Lys-167, which acts as the Schiff-base intermediate with acetaldehyde. Lys-201 (proton donor/acceptor) is an active-site residue.

The protein belongs to the DeoC/FbaB aldolase family. DeoC type 2 subfamily.

It is found in the cytoplasm. It catalyses the reaction 2-deoxy-D-ribose 5-phosphate = D-glyceraldehyde 3-phosphate + acetaldehyde. The protein operates within carbohydrate degradation; 2-deoxy-D-ribose 1-phosphate degradation; D-glyceraldehyde 3-phosphate and acetaldehyde from 2-deoxy-alpha-D-ribose 1-phosphate: step 2/2. In terms of biological role, catalyzes a reversible aldol reaction between acetaldehyde and D-glyceraldehyde 3-phosphate to generate 2-deoxy-D-ribose 5-phosphate. This Proteus mirabilis (strain HI4320) protein is Deoxyribose-phosphate aldolase.